The sequence spans 229 residues: Uracil-DNA glycosylase (229 aa).

The active-site Proton acceptor is the aspartate 70.

Belongs to the uracil-DNA glycosylase (UDG) superfamily. UNG family.

It localises to the cytoplasm. The catalysed reaction is Hydrolyzes single-stranded DNA or mismatched double-stranded DNA and polynucleotides, releasing free uracil.. Its function is as follows. Excises uracil residues from the DNA which can arise as a result of misincorporation of dUMP residues by DNA polymerase or due to deamination of cytosine. In Chlamydia abortus (strain DSM 27085 / S26/3) (Chlamydophila abortus), this protein is Uracil-DNA glycosylase.